Consider the following 954-residue polypeptide: MTQNLQMADRFDSSAVEQALYKHWEEQGYFKPTENPSLPSYCIAIPPPNVTGSLHMGHAFQQTLMDTLIRFNRMEGNNTLWQTGTDHAGIATQMVVERKIAAEEGKTRHDYGREAFINKIWDWKAYSGGTISQQMRRLGNSIDWDRERFTMDEGLSNAVKEVFVRLHEEGLIYRGKRLVNWDPKLHTAISDLEVENKESKGSLWHFRYPLANGAKTADGKDYLVVATTRPETVLGDTAVAVHPEDERYQSLIGKTVVLPLANREIPIVADEYVDREFGTGVVKITPAHDFNDYEVGKRHGLPMVNVMTMNADIRAEAEIIGTDGKPLTTYEAKIPADYQGLERFAARKKVVADFEALGLLDEIKPHDLKVPYGDRGGVPIEPMLTDQWYVSVKPLAEVATKAVEDGEIQFVPKQYENLYFSWMRDIQDWCISRQLWWGHRIPAWYDEAGNVYVARSEEEVRQKHNLPADLALRQDEDVLDTWFSSGLWTFSTLGWPEQTKELKMFHPTDVLITGFDIIFFWVARMIMFTMHFVKDENGKPQVPFKTVYVTGLIRDEQGQKMSKSKGNVLDPIDMIDGISLEDLLEKRTGNMMQPQLAEKIAKATRKEFENGIAAHGTDALRFTLAALASNGRDINWDMKRLEGYRNFCNKLWNASRFVLTNDKLDLSAGEVEYSLADRWIESKFNRTVGEFREALSQYRFDLAANAIYDFTWNEFCDWYLELTKPVFANGTEAQKRGASQTLVRVLEKLLRLAHPIMPFITEEIWQKVKGFAGIDADTIMLQPFPKVVKSELDESAEMQIGWIKELIIAVRNIRAESNIAPSKGLEFLVRNVSDEQRKILAENDRLLKAMAKLDSVQVLSADENAPLSVAKLVGNVEVLIPMAGFINKEAELARLTKEIEKMRGEITRIENKLGNEAFVAKAPEAVIAKEREKMQEYQNGLEKLQTQYQAIENL.

Residues 48–58 (PNVTGSLHMGH) carry the 'HIGH' region motif. A 'KMSKS' region motif is present at residues 560–564 (KMSKS). Lys-563 is a binding site for ATP. The stretch at 883–954 (AGFINKEAEL…QTQYQAIENL (72 aa)) forms a coiled coil.

It belongs to the class-I aminoacyl-tRNA synthetase family. ValS type 1 subfamily. As to quaternary structure, monomer.

The protein resides in the cytoplasm. The enzyme catalyses tRNA(Val) + L-valine + ATP = L-valyl-tRNA(Val) + AMP + diphosphate. Catalyzes the attachment of valine to tRNA(Val). As ValRS can inadvertently accommodate and process structurally similar amino acids such as threonine, to avoid such errors, it has a 'posttransfer' editing activity that hydrolyzes mischarged Thr-tRNA(Val) in a tRNA-dependent manner. This chain is Valine--tRNA ligase, found in Actinobacillus pleuropneumoniae serotype 5b (strain L20).